A 442-amino-acid polypeptide reads, in one-letter code: Proline--tRNA ligase (442 aa).

The protein belongs to the class-II aminoacyl-tRNA synthetase family. ProS type 2 subfamily. Homodimer.

The protein localises to the cytoplasm. It carries out the reaction tRNA(Pro) + L-proline + ATP = L-prolyl-tRNA(Pro) + AMP + diphosphate. Its function is as follows. Catalyzes the attachment of proline to tRNA(Pro) in a two-step reaction: proline is first activated by ATP to form Pro-AMP and then transferred to the acceptor end of tRNA(Pro). The polypeptide is Proline--tRNA ligase (Rhizobium meliloti (strain 1021) (Ensifer meliloti)).